Consider the following 206-residue polypeptide: Protein GrpE (206 aa).

Belongs to the GrpE family. As to quaternary structure, homodimer.

It is found in the cytoplasm. Functionally, participates actively in the response to hyperosmotic and heat shock by preventing the aggregation of stress-denatured proteins, in association with DnaK and GrpE. It is the nucleotide exchange factor for DnaK and may function as a thermosensor. Unfolded proteins bind initially to DnaJ; upon interaction with the DnaJ-bound protein, DnaK hydrolyzes its bound ATP, resulting in the formation of a stable complex. GrpE releases ADP from DnaK; ATP binding to DnaK triggers the release of the substrate protein, thus completing the reaction cycle. Several rounds of ATP-dependent interactions between DnaJ, DnaK and GrpE are required for fully efficient folding. This Psychromonas ingrahamii (strain DSM 17664 / CCUG 51855 / 37) protein is Protein GrpE.